The following is a 236-amino-acid chain: 5'-methylthioadenosine/S-adenosylhomocysteine nucleosidase (236 aa).

Residue E12 is the Proton acceptor of the active site. Substrate contacts are provided by residues G78, I153, and 174–175 (ME). D198 acts as the Proton donor in catalysis.

This sequence belongs to the PNP/UDP phosphorylase family. MtnN subfamily.

The catalysed reaction is S-adenosyl-L-homocysteine + H2O = S-(5-deoxy-D-ribos-5-yl)-L-homocysteine + adenine. The enzyme catalyses S-methyl-5'-thioadenosine + H2O = 5-(methylsulfanyl)-D-ribose + adenine. It catalyses the reaction 5'-deoxyadenosine + H2O = 5-deoxy-D-ribose + adenine. It participates in amino-acid biosynthesis; L-methionine biosynthesis via salvage pathway; S-methyl-5-thio-alpha-D-ribose 1-phosphate from S-methyl-5'-thioadenosine (hydrolase route): step 1/2. Its function is as follows. Catalyzes the irreversible cleavage of the glycosidic bond in both 5'-methylthioadenosine (MTA) and S-adenosylhomocysteine (SAH/AdoHcy) to adenine and the corresponding thioribose, 5'-methylthioribose and S-ribosylhomocysteine, respectively. Also cleaves 5'-deoxyadenosine, a toxic by-product of radical S-adenosylmethionine (SAM) enzymes, into 5-deoxyribose and adenine. The polypeptide is 5'-methylthioadenosine/S-adenosylhomocysteine nucleosidase (Shewanella baltica (strain OS223)).